Consider the following 492-residue polypeptide: Diacylglycerol kinase 7 (492 aa).

The DAGKc domain maps to 90–248 (APHAPMVVFI…SWKIVVSMPS (159 aa)).

Belongs to the eukaryotic diacylglycerol kinase family. In terms of assembly, monomer. In terms of tissue distribution, highly expressed in flowers, and at low levels in roots, stems and leaves.

The enzyme catalyses a 1,2-diacyl-sn-glycerol + ATP = a 1,2-diacyl-sn-glycero-3-phosphate + ADP + H(+). Phosphorylates the second messenger diacylglycerol (DAG) to generate phosphatidic acid (PA), another important signaling molecule. PA is required for plant development and responses to abiotic stress and pathogen attack. May be involved in the accumulation of PA during cold stress xhibits high specificity for 1,2-dioleoyl-sn-glycerol (1,2-DOG), 1-palmitoyl, 2-oleoyl-sn-glycerol (1,2 POG), 1-stearoyl, 2-linoleoyl-sn-glycerol (1,2-SLG) and 1-oleoyl, 2-palmitoyl-sn-glycerol (1,2-OPG). In Arabidopsis thaliana (Mouse-ear cress), this protein is Diacylglycerol kinase 7 (DGK7).